A 496-amino-acid chain; its full sequence is Probable histidine ammonia-lyase (496 aa).

The segment at residues 141-143 is a cross-link (5-imidazolinone (Ala-Gly)); the sequence is ASG. The residue at position 142 (Ser142) is a 2,3-didehydroalanine (Ser).

Belongs to the PAL/histidase family. In terms of processing, contains an active site 4-methylidene-imidazol-5-one (MIO), which is formed autocatalytically by cyclization and dehydration of residues Ala-Ser-Gly.

It localises to the cytoplasm. The catalysed reaction is L-histidine = trans-urocanate + NH4(+). Its pathway is amino-acid degradation; L-histidine degradation into L-glutamate; N-formimidoyl-L-glutamate from L-histidine: step 1/3. The polypeptide is Probable histidine ammonia-lyase (Thermoplasma acidophilum (strain ATCC 25905 / DSM 1728 / JCM 9062 / NBRC 15155 / AMRC-C165)).